Here is an 80-residue protein sequence, read N- to C-terminus: Cell division protein ZapB (80 aa).

Residues 3 to 80 (FEVLEKLEAK…SLLGKMEDVE (78 aa)) adopt a coiled-coil conformation.

Belongs to the ZapB family. Homodimer. The ends of the coiled-coil dimer bind to each other, forming polymers. Interacts with FtsZ.

The protein localises to the cytoplasm. Its function is as follows. Non-essential, abundant cell division factor that is required for proper Z-ring formation. It is recruited early to the divisome by direct interaction with FtsZ, stimulating Z-ring assembly and thereby promoting cell division earlier in the cell cycle. Its recruitment to the Z-ring requires functional FtsA or ZipA. This chain is Cell division protein ZapB, found in Vibrio cholerae serotype O1 (strain ATCC 39541 / Classical Ogawa 395 / O395).